Reading from the N-terminus, the 89-residue chain is DNA/RNA-binding protein Alba 1 (89 aa).

It belongs to the histone-like Alba family.

It is found in the cytoplasm. The protein localises to the chromosome. In terms of biological role, binds double-stranded DNA tightly but without sequence specificity. Involved in DNA compaction. The polypeptide is DNA/RNA-binding protein Alba 1 (Archaeoglobus fulgidus (strain ATCC 49558 / DSM 4304 / JCM 9628 / NBRC 100126 / VC-16)).